Consider the following 99-residue polypeptide: Protein S100-A11 (99 aa).

Residue Met-1 is modified to N-acetylmethionine. Residue Thr-8 is modified to Phosphothreonine. EF-hand domains lie at 10 to 47 (RCIE…ELAA) and 53 to 88 (KDPG…LAIA). Asn-29, Lys-31, Glu-36, Asp-66, Asp-68, Asp-70, Gln-72, and Glu-77 together coordinate Ca(2+).

It belongs to the S-100 family. Homodimer; disulfide-linked. In terms of processing, phosphorylation at Thr-8 significantly suppresses homodimerization and promotes association with NCL/nucleolin which induces nuclear translocation.

It is found in the cytoplasm. The protein localises to the nucleus. In terms of biological role, facilitates the differentiation and the cornification of keratinocytes. This Sus scrofa (Pig) protein is Protein S100-A11 (S100A11).